The following is a 736-amino-acid chain: MAWYWWRRRRRRGWWKPRRRRWRRRRARRRGPARRHRARRRVRRRRGRWRRRYRRWRRRGGRRRHRKKLIIKQWQPNFIRHCYIIGYMPLIICGENTFSHNYATHSDDMLSTGPYGGGMTTTKFTLRILFDEYQRHLNFWTVSNQDLDLARYLGTKIIFFRHPTVDFVVQIHTQPPFQDTEITAPSIHPGMLILSKKHILIPSLKTRPSKKHYVKVRVGAPRLFQDKWYPQSELCDVTLLVIYATACDLQYPFGSPQTDNVCVNFQILGQPYYQHLKTALGLTEKTTYENHYKNNLYKKIKFYNTTETIAQLKPLVDATTNQTWSHYVNPNKLTTTPTSEITHNNTWYRGNAYNDKITDLPEIVKKSYYKATELAIPEAVKPTTDLFEYHAGIYSSIFLSPGRAYFETPGAYQDIIYNPFTDKGIGNIVWIDWLSKSDAVYSEKQSKCGIFDLPLWAAFFGYAEFCSKSTGDTAIAYNSRVCVRCPYTEPQLLNHNNPSQGYVFYSYNFGKGKMPGGSSQVPIRMRWKWYVCMFHQLEVMEAICQSGPFAYHSDEKKAVLGIKYKFDWKWGGNPISQQIVRHPCNGQTSSGNRVPRSVQAVDPKYVSLQLVWHSWDFRRGLFGQAGIKRMQQESDALTLSPVHRPKRPKRDTQVKEKTPEKDSDSAVQLRRLQPWIHSSQETKDEEEEIPEGPVQEQLLQQLQQQRLLRVQLESIAQEVLKIRRGHSLHPLLSSHA.

The interval 633 to 692 (ESDALTLSPVHRPKRPKRDTQVKEKTPEKDSDSAVQLRRLQPWIHSSQETKDEEEEIPEG) is disordered. Basic and acidic residues predominate over residues 650-664 (RDTQVKEKTPEKDSD).

It belongs to the anelloviridae capsid protein family.

It is found in the virion. Functionally, self assemble to form an icosahedral capsid. This is Capsid protein from Torque teno virus (isolate Human/Finland/Hel32/2002) (TTV).